The sequence spans 101 residues: NAD(P)H-quinone oxidoreductase subunit 4L, chloroplastic (101 aa).

3 consecutive transmembrane segments (helical) span residues 2 to 22, 32 to 52, and 61 to 81; these read MLEYVLGLSAYLFSIGIYGLI, MCLELILNAVNINFVTFSDFF, and IFSIFVISIAAAEAAIGPAIV.

The protein belongs to the complex I subunit 4L family. As to quaternary structure, NDH is composed of at least 16 different subunits, 5 of which are encoded in the nucleus.

The protein localises to the plastid. It is found in the chloroplast thylakoid membrane. The enzyme catalyses a plastoquinone + NADH + (n+1) H(+)(in) = a plastoquinol + NAD(+) + n H(+)(out). It carries out the reaction a plastoquinone + NADPH + (n+1) H(+)(in) = a plastoquinol + NADP(+) + n H(+)(out). Its function is as follows. NDH shuttles electrons from NAD(P)H:plastoquinone, via FMN and iron-sulfur (Fe-S) centers, to quinones in the photosynthetic chain and possibly in a chloroplast respiratory chain. The immediate electron acceptor for the enzyme in this species is believed to be plastoquinone. Couples the redox reaction to proton translocation, and thus conserves the redox energy in a proton gradient. The sequence is that of NAD(P)H-quinone oxidoreductase subunit 4L, chloroplastic from Populus trichocarpa (Western balsam poplar).